The sequence spans 378 residues: UPF0754 membrane protein BCG9842_B4423 (378 aa).

A helical transmembrane segment spans residues 357-377; sequence YLGALLGGIIGLVQGLLLLFL.

Belongs to the UPF0754 family.

Its subcellular location is the cell membrane. The protein is UPF0754 membrane protein BCG9842_B4423 of Bacillus cereus (strain G9842).